A 983-amino-acid chain; its full sequence is 3',5'-cyclic-AMP phosphodiesterase, isoforms N/G (983 aa).

Disordered regions lie at residues 31 to 333, 349 to 370, 400 to 429, and 528 to 566; these read MPEG…SAGL, SDSD…ASES, VPAS…LSQG, and SAGQ…RLPT. The segment covering 35–50 has biased composition (basic and acidic residues); sequence GEDHRGDLNQKGENNN. Residues 51-60 are compositionally biased toward polar residues; the sequence is RPRPSISLAN. Gly residues predominate over residues 84 to 97; sequence SVGGGDSDGGGEAI. 2 stretches are compositionally biased toward low complexity: residues 112 to 121 and 145 to 167; these read LSTTTSNSSS and QLQQ…SQRS. The segment covering 174–199 has biased composition (acidic residues); the sequence is AEGEEFDVDPMDEDDEDQTYDRETEE. Low complexity-rich tracts occupy residues 219–234 and 248–261; these read SSLF…TTSS and AASI…SDLM. Polar residues-rich tracts occupy residues 268-287, 358-368, and 401-419; these read STAT…SQRR, KSMSRNSSIAS, and PASN…SRSG. One can recognise a PDEase domain in the interval 569 to 898; sequence VETPRENELG…DYYQSMIPPS (330 aa). Residue histidine 645 is the Proton donor of the active site. 645 to 649 serves as a coordination point for 3',5'-cyclic AMP; sequence HNSLH. Residues histidine 649, histidine 685, aspartate 686, and aspartate 803 each coordinate a divalent metal cation. 3',5'-cyclic AMP contacts are provided by aspartate 686, aspartate 803, and glutamine 854. The span at 920–937 shows a compositional bias: acidic residues; sequence EESDQENLAELEEGDESG. Residues 920 to 983 are disordered; that stretch reads EESDQENLAE…CQNQPQHGGM (64 aa). The segment covering 938 to 955 has biased composition (low complexity); that stretch reads GESTTTGTTGTTAASALS. The span at 956-967 shows a compositional bias: gly residues; it reads GAGGGGGGGGGM. Residues 973–983 show a composition bias toward polar residues; the sequence is GCQNQPQHGGM.

It belongs to the cyclic nucleotide phosphodiesterase family. PDE4 subfamily. Monomer. A divalent metal cation serves as cofactor.

The catalysed reaction is 3',5'-cyclic AMP + H2O = AMP + H(+). It participates in purine metabolism; 3',5'-cyclic AMP degradation; AMP from 3',5'-cyclic AMP: step 1/1. Hydrolyzes the second messenger cAMP, which is a key regulator of many important physiological processes. Vital for female fertility. Required for learning/memory. This Drosophila melanogaster (Fruit fly) protein is 3',5'-cyclic-AMP phosphodiesterase, isoforms N/G.